The primary structure comprises 297 residues: MKRPDYRTLQALDAVIRERGFERAAQKLCITQSAVSQRIKQLENLFGQPLLVRTVPPRPTEQGQKLLALLHQVELLEEEWLGNDNGGDTPLLLSLAVNADSLATWLLPALKPVLADSPIRLNLQVEDETRTQERLRRGEVVGAVSIQPQPLPSCLVDQLGALDYLFVASKPFAERYFPNGVTRSALLKAPAVAFDHLDDMHQAFLQQNFDLSPGSVPCHIVNSSEAFVQLARQGTTCCMIPHLQIEKELASGELINLTPGLLQRRMLFWHRFAPESRTMRKVTDALLSYGRQVLRQD.

In terms of domain architecture, HTH lysR-type spans 4–60 (PDYRTLQALDAVIRERGFERAAQKLCITQSAVSQRIKQLENLFGQPLLVRTVPPRPT). A DNA-binding region (H-T-H motif) is located at residues 21–40 (FERAAQKLCITQSAVSQRIK).

It belongs to the LysR transcriptional regulatory family. Homodimer.

Functionally, controls the transcription of genes involved in arginine and lysine metabolism. The protein is HTH-type transcriptional regulator ArgP of Yersinia enterocolitica serotype O:8 / biotype 1B (strain NCTC 13174 / 8081).